The chain runs to 212 residues: uncharacterized protein (212 aa).

Pentapeptide repeat domains lie at 63–102, 103–142, and 143–182; these read VSFR…KMVG, MNVA…ALMQ, and SECS…RFEQ.

This is an uncharacterized protein from Bacillus subtilis (strain 168).